A 642-amino-acid chain; its full sequence is Glutamyl-tRNA(Gln) amidotransferase subunit E (642 aa).

This sequence belongs to the GatB/GatE family. GatE subfamily. As to quaternary structure, heterodimer of GatD and GatE.

It catalyses the reaction L-glutamyl-tRNA(Gln) + L-glutamine + ATP + H2O = L-glutaminyl-tRNA(Gln) + L-glutamate + ADP + phosphate + H(+). In terms of biological role, allows the formation of correctly charged Gln-tRNA(Gln) through the transamidation of misacylated Glu-tRNA(Gln) in organisms which lack glutaminyl-tRNA synthetase. The reaction takes place in the presence of glutamine and ATP through an activated gamma-phospho-Glu-tRNA(Gln). The GatDE system is specific for glutamate and does not act on aspartate. This Aeropyrum pernix (strain ATCC 700893 / DSM 11879 / JCM 9820 / NBRC 100138 / K1) protein is Glutamyl-tRNA(Gln) amidotransferase subunit E.